Consider the following 31-residue polypeptide: Cytochrome b6-f complex subunit 6 (31 aa).

Residues 3-23 (TITSYFGFLLAVLTITSGLFI) form a helical membrane-spanning segment.

It belongs to the PetL family. The 4 large subunits of the cytochrome b6-f complex are cytochrome b6, subunit IV (17 kDa polypeptide, PetD), cytochrome f and the Rieske protein, while the 4 small subunits are PetG, PetL, PetM and PetN. The complex functions as a dimer.

It localises to the plastid. It is found in the chloroplast thylakoid membrane. Component of the cytochrome b6-f complex, which mediates electron transfer between photosystem II (PSII) and photosystem I (PSI), cyclic electron flow around PSI, and state transitions. PetL is important for photoautotrophic growth as well as for electron transfer efficiency and stability of the cytochrome b6-f complex. This chain is Cytochrome b6-f complex subunit 6, found in Lotus japonicus (Lotus corniculatus var. japonicus).